The chain runs to 530 residues: Inactive ubiquitin carboxyl-terminal hydrolase 17-like protein 7 (530 aa).

The USP domain maps to 80 to 375 (AGLQKIGNTF…QAYVLFYIQK (296 aa)). Basic and acidic residues predominate over residues 382-392 (SESVSRGREPR). Disordered stretches follow at residues 382 to 412 (SESV…KRDH), 431 to 454 (ESTL…NVRK), and 490 to 530 (SSTK…LVCQ). Residues 490–512 (SSTKPTDQESMNTGTLASLQGST) are compositionally biased toward polar residues. Basic residues predominate over residues 513–524 (RRSKGNNKHSKR).

This sequence belongs to the peptidase C19 family. USP17 subfamily.

The protein localises to the nucleus. Its subcellular location is the endoplasmic reticulum. This Homo sapiens (Human) protein is Inactive ubiquitin carboxyl-terminal hydrolase 17-like protein 7 (USP17L7).